Here is a 152-residue protein sequence, read N- to C-terminus: Large ribosomal subunit protein bL9 (152 aa).

The protein belongs to the bacterial ribosomal protein bL9 family.

Functionally, binds to the 23S rRNA. The polypeptide is Large ribosomal subunit protein bL9 (Nocardia farcinica (strain IFM 10152)).